The following is a 105-amino-acid chain: Nucleoid-associated protein Ccur92_18190 (105 aa).

This sequence belongs to the YbaB/EbfC family. In terms of assembly, homodimer.

It is found in the cytoplasm. The protein localises to the nucleoid. Functionally, binds to DNA and alters its conformation. May be involved in regulation of gene expression, nucleoid organization and DNA protection. The protein is Nucleoid-associated protein Ccur92_18190 of Campylobacter curvus (strain 525.92).